Reading from the N-terminus, the 955-residue chain is 2-oxoglutarate dehydrogenase E1 component (955 aa).

It belongs to the alpha-ketoglutarate dehydrogenase family. As to quaternary structure, homodimer. Part of the 2-oxoglutarate dehydrogenase (OGDH) complex composed of E1 (2-oxoglutarate dehydrogenase), E2 (dihydrolipoamide succinyltransferase) and E3 (dihydrolipoamide dehydrogenase); the complex contains multiple copies of the three enzymatic components (E1, E2 and E3). It depends on thiamine diphosphate as a cofactor.

It catalyses the reaction N(6)-[(R)-lipoyl]-L-lysyl-[protein] + 2-oxoglutarate + H(+) = N(6)-[(R)-S(8)-succinyldihydrolipoyl]-L-lysyl-[protein] + CO2. In terms of biological role, E1 component of the 2-oxoglutarate dehydrogenase (OGDH) complex which catalyzes the decarboxylation of 2-oxoglutarate, the first step in the conversion of 2-oxoglutarate to succinyl-CoA and CO(2). This Bacillus mycoides (strain KBAB4) (Bacillus weihenstephanensis) protein is 2-oxoglutarate dehydrogenase E1 component.